Consider the following 796-residue polypeptide: Cation/H(+) antiporter 6B (796 aa).

Helical transmembrane passes span 54-74 (DFWEYPLPQLEIIILSIFLLW), 93-113 (SMMLVGAVLSEMFGSMQIPCL), 131-151 (IGAFAFVLDWFLRGVTTDVGI), 159-179 (SVVIGITSMIIPWQIGKLLYS), 194-213 (YTVMTFTMSMTPFTCVNMLL), 223-243 (FGQIAQSAGMVTDLLAFFLTV), 259-279 (LAFMAFFIFVYLVRQFMLWVI), 285-305 (GAPVKNVYLYIGLLLAYLSYL), 310-330 (FLFFGPLGAFALGLAVPNGPP), 344-364 (EGIFLPLFGSLSMIKLDWSFL), 382-402 (FSFLPIVYIAKFATSFLAALA), 411-431 (IILGVIMGTKSSFELGYVLTA), and 444-464 (LLGVYILVNSLLTPMAIHFLY).

This sequence belongs to the monovalent cation:proton antiporter 2 (CPA2) transporter (TC 2.A.37) family. CHX (TC 2.A.37.4) subfamily. As to expression, preferentially expressed in pollen.

It localises to the membrane. In terms of biological role, may operate as a cation/H(+) antiporter. The chain is Cation/H(+) antiporter 6B (CHX6b) from Arabidopsis thaliana (Mouse-ear cress).